Reading from the N-terminus, the 352-residue chain is Aromatic amino acid aminotransferase (352 aa).

Position 217 is an N6-(pyridoxal phosphate)lysine (Lys-217).

This sequence belongs to the class-II pyridoxal-phosphate-dependent aminotransferase family. In terms of assembly, homodimer. Pyridoxal 5'-phosphate is required as a cofactor.

It catalyses the reaction an aromatic L-alpha-amino acid + 2-oxoglutarate = an aromatic oxo-acid + L-glutamate. Functionally, aminotransferase that catalyzes the conversion of aromatic amino acids and 2-oxoglutarate into corresponding aromatic oxo acids and L-glutamate. The chain is Aromatic amino acid aminotransferase from Cutibacterium acnes (strain DSM 16379 / KPA171202) (Propionibacterium acnes).